The sequence spans 209 residues: Kynurenine formamidase (209 aa).

Position 19 (W19) interacts with substrate. 3 residues coordinate Zn(2+): H49, H53, and D55. Residue H59 is the Proton donor/acceptor of the active site. Residues H160 and E172 each contribute to the Zn(2+) site.

It belongs to the Cyclase 1 superfamily. KynB family. As to quaternary structure, homodimer. Zn(2+) is required as a cofactor.

It catalyses the reaction N-formyl-L-kynurenine + H2O = L-kynurenine + formate + H(+). It participates in amino-acid degradation; L-tryptophan degradation via kynurenine pathway; L-kynurenine from L-tryptophan: step 2/2. Catalyzes the hydrolysis of N-formyl-L-kynurenine to L-kynurenine, the second step in the kynurenine pathway of tryptophan degradation. The polypeptide is Kynurenine formamidase (Ralstonia pickettii (strain 12J)).